The following is a 488-amino-acid chain: MSPVYVNLLGSVGLLAFWYFSYRWIQRKRLEDPLPPWLRKKKACALTRRSRHRLRRQHGVIDGENSETERSVDLVAALLAEAGEESVTEDTEREDTEEEREDEEEENEARTPEVNPMDAEGLSGLAREACEALKKALRRHRFLWQRRRRARLLQHNGPQQSHHAAVFCRVHGLRGFQVSVWLLLTLFWSTGYGVSVRCTYHGTDINVTSNATSMNCRLNCTCNHTQIYNGPCAGAESKLPLNVTFRQSRRQWHSVMLTFGFQYHLEGWFPLRILNESRDINVTEVYGEVACFTNDTNITMGQLTLNLTGRSYVLRALARTSPFESSVNWEETNVTDNATSSENNTVTVMSVLTVYAESDYIFLQDMCPRFLKRSVKLAKNNRRNTTFTGTNVTSLPEWTLQQCQGWKYWTTLSIMWKNRRSALLRAKSRALGHWALLSICTVAAGSIALLSLFCILLIGLRRDLLEDFRYICRDEGSSSTKNDVHWIV.

A signal peptide spans 1–22; the sequence is MSPVYVNLLGSVGLLAFWYFSY. The segment covering 83–107 has biased composition (acidic residues); the sequence is GEESVTEDTEREDTEEEREDEEEEN. Residues 83-119 are disordered; it reads GEESVTEDTEREDTEEEREDEEEENEARTPEVNPMDA. Asn-206, Asn-210, Asn-219, Asn-223, Asn-242, Asn-275, Asn-281, Asn-294, Asn-297, Asn-306, Asn-333, Asn-337, Asn-343, Asn-384, and Asn-391 each carry an N-linked (GlcNAc...) asparagine; by host glycan. The chain crosses the membrane as a helical span at residues 439 to 459; it reads ICTVAAGSIALLSLFCILLIG.

It belongs to the immediate early glycoprotein family. Interacts with host BAX. Interacts with host RSAD2/viperin; this interaction results in RSAD2/viperin relocalization from the endoplasmic reticulum to the mitochondria, actin cytoskeleton disruption and enhancement of infection. Interacts with host PEX19; this interaction inhibits the peroxisomal-dependent antiviral signaling. Interacts with host CHCHD6; this interaction rewires mitochondria by engaging the conserved MICOS complex.

Its subcellular location is the host membrane. The protein localises to the host endoplasmic reticulum membrane. It localises to the host Golgi apparatus membrane. The protein resides in the host mitochondrion membrane. It is found in the host peroxisome. Functionally, multifunctional transmembrane protein that plays several key roles in viral replication. Rapidely traffics from the host endoplasmic reticulum to the outer mitochondrial membrane where it acts to inhibit host immune response, block apoptotic signaling, regulate calcium flux, and induce mitochondrial fragmentation. Sequesters proapoptotic BAX at the outer mitochondrial membrane and prevents cytochrome c release and subsequent initiation of the proapoptotic cascade. Also provoques a calcium efflux from host endoplasmic reticulum and F-actin cytoskeleton disruption. Participates in the increase of host mitochondrial biogenesis, thus promoting viral replication by efficient use of newly made mitochondria. Additionally, a subset of vMIA localizes to peroxisomes, causing fragmentation and blocking peroxisomal MAVS signaling. Mechanistically, inhibits host MAVS oligomerization at peroxisomes in a mitochondrial fission factors (MFF)-dependent manner and in mitochondria independently of mitochondrial fission factors. Plays an essential role in the trafficking of host viperin/RSAD2 from the endoplasmic reticulum to the viral assembly compartment via the mitochondria during viral infection as failure of viperin to localize to the mitochondria results in insufficient lipogenesis and thus reduces viral replication. Its function is as follows. May play a role in escape from the host antiviral response. The sequence is that of UL37 immediate early glycoprotein (UL37) from Homo sapiens (Human).